A 205-amino-acid chain; its full sequence is SREBP regulating gene protein (205 aa).

The Cytoplasmic portion of the chain corresponds to 1-16 (MLNLAALLWRRLLRKR). A helical transmembrane segment spans residues 17 to 35 (WVLALVFGLSLVYFLSSTF). Topologically, residues 36–205 (KQEERAVRDR…GESPPELFPA (170 aa)) are lumenal. A glycan (N-linked (GlcNAc...) asparagine) is linked at Asn67.

The protein belongs to the SPRING family. As to quaternary structure, interacts with SCAP. Ubiquitously expressed with a slightly higher expression in the liver and kidney.

Its subcellular location is the golgi apparatus membrane. Its function is as follows. Positively regulates hepatic SREBP signaling pathway by modulating the proper localization of SCAP (SREBP cleavage-activating protein) to the endoplasmic reticulum, thereby controlling the level of functional SCAP. Plays a crucial role during embryogenesis. This is SREBP regulating gene protein (Spring1) from Mus musculus (Mouse).